A 540-amino-acid polypeptide reads, in one-letter code: Probable G-protein coupled receptor 75 (540 aa).

Over residues 1–15 (MNSTGHLQDAPNATS) the composition is skewed to polar residues. The disordered stretch occupies residues 1–27 (MNSTGHLQDAPNATSLHVPHSQEGNST). Over 1-46 (MNSTGHLQDAPNATSLHVPHSQEGNSTSLQEGLQDLIHTATLVTCT) the chain is Extracellular. N-linked (GlcNAc...) asparagine glycosylation is found at Asn2, Asn12, and Asn25. A helical membrane pass occupies residues 47–67 (FLLAVIFCLGSYGNFIVFLSF). At 68–86 (FDPAFRKFRTNFDFMILNL) the chain is on the cytoplasmic side. Residues 87–107 (SFCDLFICGVTAPMFTFVLFF) form a helical membrane-spanning segment. Residues 108 to 120 (SSASSIPDAFCFT) lie on the Extracellular side of the membrane. The helical transmembrane segment at 121-141 (FHLTSSGFIIMSLKTVAVIAL) threads the bilayer. Residues 142 to 160 (HRLRMVLGKQPNRTASFPC) are Cytoplasmic-facing. The chain crosses the membrane as a helical span at residues 161–181 (TVLLTLLLWATSFTLATLATL). At 182-205 (KTSKSHLCLPMSSLIAGKGKAILS) the chain is on the extracellular side. Residues 206–226 (LYVVDFTFCVAVVSVSYIMIA) traverse the membrane as a helical segment. The Cytoplasmic portion of the chain corresponds to 227–318 (QTLRKNAQVR…INLSTAKDSK (92 aa)). Residues 319–339 (AVVTCVIIVLSVLVCCLPLGI) traverse the membrane as a helical segment. The Extracellular portion of the chain corresponds to 340 to 350 (SLVQVVLSSNG). The chain crosses the membrane as a helical span at residues 351–371 (SFILYQFELFGFTLIFFKSGL). Topologically, residues 372–540 (NPFIYSRNSA…SAKQIPVPSV (169 aa)) are cytoplasmic.

The protein belongs to the G-protein coupled receptor 1 family. In terms of tissue distribution, expressed at high levels in brain and spinal cord and at detectable levels in retinal pigment epithelium. In situ hybridization of adult eye sections localized transcripts only to the perivascular cells, surrounding retinal arterioles, in the ganglion cell/nerve fiber layer. Also expressed by islet cells (at protein level).

It localises to the cell membrane. G protein-coupled receptor that is activated by the chemokine CCL5/RANTES. Probably coupled to heterotrimeric Gq proteins, it stimulates inositol trisphosphate production and calcium mobilization upon activation. Together with CCL5/RANTES, may play a role in neuron survival through activation of a downstream signaling pathway involving the PI3, Akt and MAP kinases. CCL5/RANTES may also regulate insulin secretion by pancreatic islet cells through activation of this receptor. The protein is Probable G-protein coupled receptor 75 (GPR75) of Homo sapiens (Human).